The sequence spans 121 residues: Large ribosomal subunit protein uL18 (121 aa).

Belongs to the universal ribosomal protein uL18 family. Part of the 50S ribosomal subunit; part of the 5S rRNA/L5/L18/L25 subcomplex. Contacts the 5S and 23S rRNAs.

Its function is as follows. This is one of the proteins that bind and probably mediate the attachment of the 5S RNA into the large ribosomal subunit, where it forms part of the central protuberance. The polypeptide is Large ribosomal subunit protein uL18 (Burkholderia ambifaria (strain MC40-6)).